We begin with the raw amino-acid sequence, 318 residues long: Non-homologous end joining protein Ku (318 aa).

In terms of domain architecture, Ku spans 10 to 193 (AFGLVNVPVK…EVQIKPAELK (184 aa)). Residues 259-318 (SVKARKGGKSDSKDDSDSESDSKESKSDSKPAKKAPAKKAAAKKSTAKKAPAKKAAAKKS) are disordered. Residues 266 to 289 (GKSDSKDDSDSESDSKESKSDSKP) are compositionally biased toward basic and acidic residues. Over residues 290–318 (AKKAPAKKAAAKKSTAKKAPAKKAAAKKS) the composition is skewed to basic residues.

This sequence belongs to the prokaryotic Ku family. As to quaternary structure, homodimer. Interacts with Sir2 and probably also with LigD; may form a trimeric complex during NHEJ.

With LigD forms a non-homologous end joining (NHEJ) repair enzyme which repairs blunt-end and 5'-overhang double strand breaks (DSB) with about 50% fidelity, and DSB with non-complementary 3' ends. Plays a partial role in NHEJ on 3'-overhang repair of complementary ends. NHEJ repairs DSB with blunt ends and 5' overhangs with a high level of nucleotide insertion/deletion, without a need for microhomology. This protein but not LigD also suppresses homologous recombination. Overexpression dramatically increases the efficiency of NHEJ with no effect on repair fidelity. The chain is Non-homologous end joining protein Ku from Mycolicibacterium smegmatis (strain ATCC 700084 / mc(2)155) (Mycobacterium smegmatis).